The primary structure comprises 485 residues: Glutamyl-tRNA(Gln) amidotransferase subunit A (485 aa).

Catalysis depends on charge relay system residues K78 and S153. The active-site Acyl-ester intermediate is S177.

It belongs to the amidase family. GatA subfamily. Heterotrimer of A, B and C subunits.

The enzyme catalyses L-glutamyl-tRNA(Gln) + L-glutamine + ATP + H2O = L-glutaminyl-tRNA(Gln) + L-glutamate + ADP + phosphate + H(+). Functionally, allows the formation of correctly charged Gln-tRNA(Gln) through the transamidation of misacylated Glu-tRNA(Gln) in organisms which lack glutaminyl-tRNA synthetase. The reaction takes place in the presence of glutamine and ATP through an activated gamma-phospho-Glu-tRNA(Gln). The sequence is that of Glutamyl-tRNA(Gln) amidotransferase subunit A from Bacillus mycoides (strain KBAB4) (Bacillus weihenstephanensis).